The following is a 626-amino-acid chain: MIIFKKKAILKVLLLVPVFWICSLIFFAATSNDSSQIGSNNDLANKIAEANFHPKAAKQDVIQGFGPPIEPEPVVENNKVEEEEQPGGNLAKPKFMVDPNDPIYKKGDAAQAGELGKAVVVDKTKLSTEEKAKYDKGMLNNAFNQYASDMISVHRTLPTNIDAECKTEKYNENLPRTSVIICFHNEAWSVLLRTVHSVLERTPDHLLEEVVLVDDFSDMDHTKRPLEEYMSQFGGKVKILRMEKREGLIRARLRGAAVATGEVLTYLDSHCECMEGWMEPLLDRIKRDPTTVVCPVIDVIDDNTFEYHHSKAYFTSVGGFDWGLQFNWHSIPERDRKNRTRPIDPVRSPTMAGGLFSIDKKYFEKLGTYDPGFDIWGGENLELSFKIWMCGGTLEIVPCSHVGHVFRKRSPYKWRTGVNVLKRNSIRLAEVWLDDYKTYYYERINNQLGDFGDISSRKKLREDLGCKSFKWYLDNIYPELFVPGESVAKGEVRNSAVQPARCLDCMVGRHEKNRPVGTYQCHGQGGNQYWMLSKDGEIRRDESCVDYAGSDVMVFPCHGMKGNQEWRYNHDTGRLQHAVSQKCLGMTKDGAKLEMVACQYDDPYQHWKFKEYNEAKAIEHGAKPPS.

Topologically, residues 1–11 are cytoplasmic; it reads MIIFKKKAILK. Residues 12-31 form a helical; Signal-anchor for type II membrane protein membrane-spanning segment; it reads VLLLVPVFWICSLIFFAATS. Asn-32 is a glycosylation site (N-linked (GlcNAc...) asparagine). Residues 32 to 626 are Lumenal-facing; that stretch reads NDSSQIGSNN…AIEHGAKPPS (595 aa). Cystine bridges form between Cys-165–Cys-399, Cys-390–Cys-466, Cys-502–Cys-521, Cys-544–Cys-557, and Cys-583–Cys-598. A catalytic subdomain A region spans residues 174–284; that stretch reads LPRTSVIICF…EGWMEPLLDR (111 aa). 2 residues coordinate substrate: Asp-215 and Arg-245. Asp-268 is a Mn(2+) binding site. Ser-269 provides a ligand contact to substrate. His-270 lines the Mn(2+) pocket. An N-linked (GlcNAc...) asparagine glycan is attached at Asn-338. The catalytic subdomain B stretch occupies residues 345 to 407; it reads PVRSPTMAGG…PCSHVGHVFR (63 aa). A substrate-binding site is contributed by Trp-376. Residue His-404 participates in Mn(2+) binding. The substrate site is built by Arg-407 and Tyr-412. In terms of domain architecture, Ricin B-type lectin spans 488-610; that stretch reads AKGEVRNSAV…DDPYQHWKFK (123 aa).

It belongs to the glycosyltransferase 2 family. GalNAc-T subfamily. The cofactor is Mn(2+).

It is found in the golgi apparatus membrane. It carries out the reaction L-seryl-[protein] + UDP-N-acetyl-alpha-D-galactosamine = a 3-O-[N-acetyl-alpha-D-galactosaminyl]-L-seryl-[protein] + UDP + H(+). The enzyme catalyses L-threonyl-[protein] + UDP-N-acetyl-alpha-D-galactosamine = a 3-O-[N-acetyl-alpha-D-galactosaminyl]-L-threonyl-[protein] + UDP + H(+). It participates in protein modification; protein glycosylation. Functionally, catalyzes the initial reaction in O-linked oligosaccharide biosynthesis, the transfer of an N-acetyl-D-galactosamine residue to a serine or threonine residue on the protein receptor. This chain is Polypeptide N-acetylgalactosaminyltransferase 5 (gly-5), found in Caenorhabditis elegans.